The primary structure comprises 806 residues: Disintegrin and metalloproteinase domain-containing protein 1b (806 aa).

The N-terminal stretch at 1 to 33 is a signal peptide; it reads MERLKLGKIPEHWCIRLVAMLLLAIIFLPSTFC. A disordered region spans residues 169 to 188; that stretch reads CSVTPKDSPGDTSHPPRSRK. The Peptidase M12B domain maps to 203 to 397; sequence KYVEMFVVVN…HRGVCLLDEP (195 aa). The N-linked (GlcNAc...) asparagine glycan is linked to N224. Intrachain disulfides connect C313–C392, C353–C376, C355–C361, C462–C482, C635–C647, C641–C653, and C655–C664. H338 is a Zn(2+) binding site. E339 is a catalytic residue. 2 residues coordinate Zn(2+): H342 and H348. Residues N375 and N476 are each glycosylated (N-linked (GlcNAc...) asparagine). In terms of domain architecture, Disintegrin spans 406–490; the sequence is AANCGNGVVE…ACPSDRKAQD (85 aa). An EGF-like domain is found at 631–665; the sequence is FSFPCSPSKQCNKHGVCNDLGNCHCSFGFAPPDCK. Residues 668–694 are disordered; the sequence is GTGGSVDSGPAVNLSNDSSPGPNSTQS. Residues N680, N683, and N690 are each glycosylated (N-linked (GlcNAc...) asparagine). Over residues 680–694 the composition is skewed to polar residues; sequence NLSNDSSPGPNSTQS. The helical transmembrane segment at 705–725 threads the bilayer; sequence LIVLAVILVLMILLIIICIIS. At 726–806 the chain is on the cytoplasmic side; it reads AYTKSETASE…KDEDEEEGEE (81 aa). The segment at 735–806 is disordered; it reads EAGPSELEEL…KDEDEEEGEE (72 aa). Residues 740–806 are compositionally biased toward acidic residues; the sequence is ELEELPEGEK…KDEDEEEGEE (67 aa).

In terms of assembly, heterodimer with ADAM2/fertilin subunit beta. As to expression, testis.

It is found in the membrane. Its function is as follows. May play a role in spermatogenesis and sperm maturation. In Mus musculus (Mouse), this protein is Disintegrin and metalloproteinase domain-containing protein 1b (Adam1b).